The following is a 151-amino-acid chain: MKYQQLENLECGWKWNYLVKKWKEGESITCHIDSSEADVAVQALLKLEHQPTGVLEWISDNMSPELDNKLKQAIRAKRKRHFNAEQVHTKKKSIDLDYRVWEKLSQRANELGCTLSDAIEYLVSEASRSEQASKTVTNLKEDLSKLLSDDK.

The protein belongs to the MatP family. Homodimer.

It localises to the cytoplasm. Its function is as follows. Required for spatial organization of the terminus region of the chromosome (Ter macrodomain) during the cell cycle. Prevents early segregation of duplicated Ter macrodomains during cell division. Binds specifically to matS, which is a 13 bp signature motif repeated within the Ter macrodomain. This chain is Macrodomain Ter protein, found in Vibrio atlanticus (strain LGP32) (Vibrio splendidus (strain Mel32)).